The sequence spans 282 residues: Pantothenate synthetase (282 aa).

30–37 contacts ATP; that stretch reads MGYFHEGH. Catalysis depends on histidine 37, which acts as the Proton donor. Glutamine 61 serves as a coordination point for (R)-pantoate. Glutamine 61 is a binding site for beta-alanine. 147–150 contacts ATP; sequence GQKD. Glutamine 153 contributes to the (R)-pantoate binding site. ATP is bound by residues valine 176 and 184 to 187; that span reads LSSR.

Belongs to the pantothenate synthetase family. Homodimer.

It localises to the cytoplasm. The enzyme catalyses (R)-pantoate + beta-alanine + ATP = (R)-pantothenate + AMP + diphosphate + H(+). It participates in cofactor biosynthesis; (R)-pantothenate biosynthesis; (R)-pantothenate from (R)-pantoate and beta-alanine: step 1/1. Its function is as follows. Catalyzes the condensation of pantoate with beta-alanine in an ATP-dependent reaction via a pantoyl-adenylate intermediate. The protein is Pantothenate synthetase of Maridesulfovibrio salexigens (strain ATCC 14822 / DSM 2638 / NCIMB 8403 / VKM B-1763) (Desulfovibrio salexigens).